A 528-amino-acid chain; its full sequence is Glucose-6-phosphate isomerase (528 aa).

Glu322 (proton donor) is an active-site residue. Active-site residues include His351 and Lys455.

The protein belongs to the GPI family.

It localises to the cytoplasm. It carries out the reaction alpha-D-glucose 6-phosphate = beta-D-fructose 6-phosphate. Its pathway is carbohydrate biosynthesis; gluconeogenesis. It participates in carbohydrate degradation; glycolysis; D-glyceraldehyde 3-phosphate and glycerone phosphate from D-glucose: step 2/4. Functionally, catalyzes the reversible isomerization of glucose-6-phosphate to fructose-6-phosphate. In Trichormus variabilis (strain ATCC 29413 / PCC 7937) (Anabaena variabilis), this protein is Glucose-6-phosphate isomerase.